We begin with the raw amino-acid sequence, 77 residues long: Oxyopinin-4a (77 aa).

Residues 1-20 form the signal peptide; it reads MKISQVFIFVFLLMISVAWA. Positions 21-47 are excised as a propeptide; it reads NEAYEEESNYLSERFDADVEEITPEFR. Residues C51 and C57 are joined by a disulfide bond.

In terms of tissue distribution, expressed by the venom gland.

The protein localises to the secreted. The protein resides in the target cell membrane. Disrupts cell membranes through the formation of pores. Has antibacterial activity against Gram-positive bacteria S.aureus (MIC=10 uM) and B.subtilis (MIC=0.5 uM) as well as Gram-negative bacteria P.fluorescens (MIC=1 uM) and E.coli (MIC=0.5 uM). Has hemolytic activity against human erythrocytes (EC(50)=7 uM). This chain is Oxyopinin-4a, found in Oxyopes takobius (Lynx spider).